Reading from the N-terminus, the 64-residue chain is Neurotoxin BmK-II (64 aa).

The LCN-type CS-alpha/beta domain maps to 2-64; sequence RDAYIAKPHN…VPIRIPGNCH (63 aa). Disulfide bonds link cysteine 12–cysteine 63, cysteine 16–cysteine 36, cysteine 22–cysteine 46, and cysteine 26–cysteine 48.

This sequence belongs to the long (4 C-C) scorpion toxin superfamily. Sodium channel inhibitor family. Alpha subfamily. In terms of tissue distribution, expressed by the venom gland.

It localises to the secreted. Functionally, binds to sodium channels (Nav) and inhibits the inactivation of the activated channels, thereby blocking neuronal transmission. This toxin is active against mammals and insects. BmK-II is 6-fold less toxic than BmK-I. This is Neurotoxin BmK-II from Olivierus martensii (Manchurian scorpion).